The following is a 268-amino-acid chain: Tryptophan synthase alpha chain (268 aa).

Residues glutamate 49 and aspartate 60 each act as proton acceptor in the active site.

Belongs to the TrpA family. Tetramer of two alpha and two beta chains.

It carries out the reaction (1S,2R)-1-C-(indol-3-yl)glycerol 3-phosphate + L-serine = D-glyceraldehyde 3-phosphate + L-tryptophan + H2O. Its pathway is amino-acid biosynthesis; L-tryptophan biosynthesis; L-tryptophan from chorismate: step 5/5. Its function is as follows. The alpha subunit is responsible for the aldol cleavage of indoleglycerol phosphate to indole and glyceraldehyde 3-phosphate. The chain is Tryptophan synthase alpha chain from Pseudomonas aeruginosa (strain UCBPP-PA14).